A 715-amino-acid polypeptide reads, in one-letter code: Metastasis-associated protein MTA1 (715 aa).

In terms of domain architecture, BAH spans 1–164; the sequence is MAANMYRVGD…PQQKTLLADK (164 aa). In terms of domain architecture, ELM2 spans 165–276; the sequence is GEIRVGNRYQ…KAISALVPQG (112 aa). K182 participates in a covalent cross-link: Glycyl lysine isopeptide (Lys-Gly) (interchain with G-Cter in ubiquitin). Positions 283–335 constitute an SANT domain; sequence DEMEEWSASEANLFEEALEKYGKDFTDIQQDFLPWKSLTSIIEYYYMWKTTDR. Phosphoserine is present on S386. The GATA-type; atypical zinc-finger motif lies at 393–420; that stretch reads CESCYTTQSYQWYSWGPPNMQCRLCASC. The tract at residues 435–460 is disordered; sequence RLDGERPGPNRSNMSPHGLPARSSGS. A phosphoserine mark is found at S446 and S449. Residue K509 forms a Glycyl lysine isopeptide (Lys-Gly) (interchain with G-Cter in SUMO2 and SUMO3) linkage. A Phosphoserine modification is found at S522. Positions 545–552 match the SH3-binding motif; sequence PRPPKPDP. Residue K549 forms a Glycyl lysine isopeptide (Lys-Gly) (interchain with G-Cter in SUMO2) linkage. Phosphothreonine is present on T564. Residue S576 is modified to Phosphoserine. T578 carries the post-translational modification Phosphothreonine. Residue K626 is modified to N6-acetyllysine; alternate. Residue K626 forms a Glycyl lysine isopeptide (Lys-Gly) (interchain with G-Cter in ubiquitin); alternate linkage. S639 carries the post-translational modification Phosphoserine. An interaction with RBBP4 region spans residues 656-686; that stretch reads DVFYMATEETRKIRKLLSSSETKRAARRPYK. The tract at residues 673-715 is disordered; that stretch reads SSSETKRAARRPYKPIALRQSQALPPRPPPPAPVNDEPIVIED. The short motif at 696-705 is the SH3-binding element; the sequence is LPPRPPPPAP. The SUMO interaction motif 1 (SIM); crucial for efficient sumoylation motif lies at 711–715; it reads IVIED.

The protein belongs to the metastasis-associated protein family. As to quaternary structure, component of the nucleosome remodeling and deacetylase (NuRD) repressor complex, composed of core proteins MTA1, MTA2, MTA3, RBBP4, RBBP7, HDAC1, HDAC2, MBD2, MBD3, and peripherally associated proteins CDK2AP1, CDK2AP2, GATAD2A, GATAD2B, CHD3, CHD4 and CHD5. The exact stoichiometry of the NuRD complex is unknown, and some subunits such as MBD2 and MBD3, GATAD2A and GATAD2B, and CHD3, CHD4 and CHD5 define mutually exclusive NuRD complexes. Interacts with RBBP4; the interaction is direct. Interacts with BMAL1. Interacts with CLOCK. Interacts with COP1. Interacts with CSNK1G2 in the cytoplasm. Interacts with EP300. Interacts with HDAC2. Interacts with IFI16. Interacts with ITGB3BP/CENPR. Interacts with MBD3L2. Interacts with MDM2. Interacts with NACC2. Interacts with p53/TP53. Interacts with PIAS1. Interacts with PIAS3. Interacts with PIAS4. Interacts with PWWP2A. Interacts with PWWP2B. Interacts with SENP1. Interacts with SENP2. Interacts with SIX3; facilitates the binding of SIX3 to the core DNA motif of SIX3 promoter. Interacts with SUMO1. Interacts with SUMO2. Interacts with TFCP2L1; which is indispensable for TFCP2L1-mediated self-renewal-promoting effect and endoderm-inhibiting action. Interacts with TFAP2C. Interacts with TPR. Interacts with UBE2I/UBC9. Phosphorylation by CSNK1G2/CK1 triggered by estrogen enhances corepression of estrogen receptor (ER). In terms of processing, acetylation is essential for its transcriptional coactivator activity. Post-translationally, sumoylation positively regulates its transcriptional corepressor activity but does not affect the protein stability. Sumoylated preferentially by SUMO2 or SUMO3 than SUMO1. Sumoylation is enhanced by PIAS1/3/4 and preferentially sumoylated by SUMO2 in the presence of PIAS1/3/4. Desumoylated by SENP1. Ubiquitinated by COP1, which leads to proteasomal degradation. Widely expressed. High expression in brain, liver, kidney, and cardiac muscle, ovaries, adrenal glands and virgin mammary glands. Higher in tumors than in adjacent normal tissue from the same individual. Up-regulated in a wide variety of cancers including breast, liver, ovarian, and colorectal cancer and its expression levels are closely correlated with tumor aggressiveness and metastasis.

Its subcellular location is the nucleus. The protein localises to the cytoplasm. It localises to the nucleus envelope. The protein resides in the cytoskeleton. Transcriptional coregulator which can act as both a transcriptional corepressor and coactivator. Acts as a component of the histone deacetylase NuRD complex which participates in the remodeling of chromatin. In the NuRD complex, regulates transcription of its targets by modifying the acetylation status of the target chromatin and cofactor accessibility to the target DNA. In conjunction with other components of NuRD, acts as a transcriptional corepressor of BRCA1, ESR1, TFF1 and CDKN1A. Acts as a transcriptional coactivator of BCAS3, and SUMO2, independent of the NuRD complex. Stimulates the expression of WNT1 by inhibiting the expression of its transcriptional corepressor SIX3. Regulates p53-dependent and -independent DNA repair processes following genotoxic stress. Regulates the stability and function of p53/TP53 by inhibiting its ubiquitination by COP1 and MDM2 thereby regulating the p53-dependent DNA repair. Plays a role in the regulation of the circadian clock and is essential for the generation and maintenance of circadian rhythms under constant light and for normal entrainment of behavior to light-dark (LD) cycles. Positively regulates the CLOCK-BMAL1 heterodimer mediated transcriptional activation of its own transcription and the transcription of CRY1. Regulates deacetylation of BMAL1 by regulating SIRT1 expression, resulting in derepressing CRY1-mediated transcription repression. With TFCP2L1, promotes establishment and maintenance of pluripotency in embryonic stem cells (ESCs) and inhibits endoderm differentiation. Its function is as follows. Binds to ESR1 and sequesters it in the cytoplasm and enhances its non-genomic responses. The polypeptide is Metastasis-associated protein MTA1 (MTA1) (Homo sapiens (Human)).